The sequence spans 175 residues: uncharacterized protein (175 aa).

An N-terminal signal peptide occupies residues 1 to 22; the sequence is MNRIVGILISILMLACIGVTMA.

This is an uncharacterized protein from Archaeoglobus fulgidus (strain ATCC 49558 / DSM 4304 / JCM 9628 / NBRC 100126 / VC-16).